The chain runs to 591 residues: MFGIQDSIQRSGSSMKEEPIGAGMNAVRTWMQGAGVLDANTAAQSGVGLARAHFEKQPPSNLRKSNFFHFVLALYDRQGQPVEIERTSFVGFVEKEKESTGEKTNNGIHYRLQLLYSNGIRTEQDFYVRLIDSMTKQAIIYEGQDKNPEMCRVLLTHEIMCSRCCDKKSCGNRNETPSDPVIIDRFFLKFFLKCNQNCLKNAGNPRDMRRFQVVVSTTVSVDGHVLAVSDNMFVHNNSKHGRRARRLDPSEGTPSYLEHATPCIKAISPSEGWTTGGATVIIIGDNFFDGLQVIFGTMLVWSELITPHAIRVQTPPRHIPGVVEVTLSYKSKQFCKGTPGRFIYTALNEPTIDYGFQRLQKVIPRHPGDPERLPKEVILKRAADLVEALYGMPHNNQEIILKRAADIAEALYNVPRGHNQLPGLTNSSVHSGMMGVNSFHSQLAVNVSDSTQAANQGFSRNTSSVSPHGYVPSTTPQQSSYSTVSTSMNGYGNAGMTTLGGSPNFLNGSAANSPYAIVPSSPTMASSTSLPSNCSSSSGIFSFSPANMVSAVKQKSAFAPVVRPQASPPPTCTSANGNGLQVIPGMIVPPM.

An interaction with DNA region spans residues 63 to 66 (RKSN). A C5-type zinc finger spans residues 151–170 (CRVLLTHEIMCSRCCDKKSC). Interaction with DNA stretches follow at residues 197 to 204 (NCLKNAGN) and 236 to 239 (NNSK). Residues 262-344 (PCIKAISPSE…CKGTPGRFIY (83 aa)) form the IPT/TIG domain. Over residues 454–466 (ANQGFSRNTSSVS) the composition is skewed to polar residues. Residues 454–484 (ANQGFSRNTSSVSPHGYVPSTTPQQSSYSTV) form a disordered region. A compositionally biased stretch (low complexity) spans 471–484 (VPSTTPQQSSYSTV).

The protein belongs to the COE family. As to quaternary structure, forms either a homodimer or a heterodimer with a related family member. As to expression, detected in B cells.

It is found in the nucleus. Its function is as follows. Transcriptional activator. The chain is Transcription factor COE1-A from Danio rerio (Zebrafish).